Reading from the N-terminus, the 160-residue chain is Dihydrofolate reductase (160 aa).

One can recognise a DHFR domain in the interval 1 to 160 (MVKAIWAMDQ…KVAYYHKIAR (160 aa)). 5-7 (IWA) lines the substrate pocket. NADP(+) is bound by residues 6–7 (WA) and 14–19 (IGNGNS). Residues E27 and R32 each contribute to the substrate site. 43–46 (GSAT) is a binding site for NADP(+). R57 lines the substrate pocket. NADP(+) contacts are provided by residues 62 to 65 (LTRN) and 101 to 106 (CGGAQV). Substrate is bound at residue S120.

Belongs to the dihydrofolate reductase family.

It catalyses the reaction (6S)-5,6,7,8-tetrahydrofolate + NADP(+) = 7,8-dihydrofolate + NADPH + H(+). It functions in the pathway cofactor biosynthesis; tetrahydrofolate biosynthesis; 5,6,7,8-tetrahydrofolate from 7,8-dihydrofolate: step 1/1. Key enzyme in folate metabolism. Catalyzes an essential reaction for de novo glycine and purine synthesis, and for DNA precursor synthesis. The chain is Dihydrofolate reductase (folA) from Mycoplasma pneumoniae (strain ATCC 29342 / M129 / Subtype 1) (Mycoplasmoides pneumoniae).